A 1164-amino-acid chain; its full sequence is DNA-directed RNA polymerase subunit beta (1164 aa).

Disordered stretches follow at residues 975–994 and 1143–1164; these read RSSL…GKSN and ANAA…MDVS. Composition is skewed to basic and acidic residues over residues 981-991 and 1152-1164; these read RDGERQVDDFG and SRDE…MDVS.

This sequence belongs to the RNA polymerase beta chain family. The RNAP catalytic core consists of 2 alpha, 1 beta, 1 beta' and 1 omega subunit. When a sigma factor is associated with the core the holoenzyme is formed, which can initiate transcription.

The catalysed reaction is RNA(n) + a ribonucleoside 5'-triphosphate = RNA(n+1) + diphosphate. In terms of biological role, DNA-dependent RNA polymerase catalyzes the transcription of DNA into RNA using the four ribonucleoside triphosphates as substrates. The polypeptide is DNA-directed RNA polymerase subunit beta (Corynebacterium jeikeium (strain K411)).